The chain runs to 695 residues: Scarecrow-like protein 31 (695 aa).

2 disordered regions span residues 105–136 and 234–260; these read VISD…NSSN and ISKT…RSKQ. Positions 113–136 are enriched in low complexity; that stretch reads SSIPNNSITTSSSSNSGDYSNSSN. Residues 233-266 are a coiled coil; that stretch reads AISKTRKNHHEREEEEDDLEEARRRSKQFAVNEE. The GRAS domain maps to 306 to 693; the sequence is AKKKSRAVDF…RILFSSSCWV (388 aa). Residues 313–377 are leucine repeat I (LRI); sequence VDFRTLLTLC…EGSTGTMIQS (65 aa). Positions 396 to 461 are VHIID; that stretch reads YSVFLSASPF…PGLRKLRITG (66 aa). Residues 427–431 carry the VHIID motif; the sequence is LHIVD. Residues 477 to 509 form a leucine repeat II (LRII) region; sequence DTGRRLTEYCKRFGVPFEYNAIASKNWETIKME. A PFYRE region spans residues 519–614; the sequence is LAVNAVLRFK…GEFYGREVMN (96 aa). The segment at 617–693 is SAW; the sequence is ACEGVDRVER…RILFSSSCWV (77 aa).

Belongs to the GRAS family. As to expression, expressed in seedlings, roots, cotyledons, leaves and sepals.

It localises to the nucleus. Probable transcription factor involved in plant development. This chain is Scarecrow-like protein 31 (SCL31), found in Arabidopsis thaliana (Mouse-ear cress).